A 379-amino-acid chain; its full sequence is uncharacterized protein (379 aa).

The protein belongs to the glycosyltransferase 28 family.

This is an uncharacterized protein from Methanosarcina mazei (strain ATCC BAA-159 / DSM 3647 / Goe1 / Go1 / JCM 11833 / OCM 88) (Methanosarcina frisia).